A 263-amino-acid chain; its full sequence is UPF0758 protein NGR_c13970 (263 aa).

One can recognise an MPN domain in the interval 141–263; the sequence is VLSSWSAVID…HVSMKGLRLF (123 aa). Residues H212, H214, and D225 each coordinate Zn(2+). The short motif at 212 to 225 is the JAMM motif element; sequence HNHPSGDPTPSRAD.

It belongs to the UPF0758 family.

The polypeptide is UPF0758 protein NGR_c13970 (Sinorhizobium fredii (strain NBRC 101917 / NGR234)).